The sequence spans 382 residues: UDP-4-amino-4-deoxy-L-arabinose--oxoglutarate aminotransferase (382 aa).

Residue Lys-183 is modified to N6-(pyridoxal phosphate)lysine.

The protein belongs to the DegT/DnrJ/EryC1 family. ArnB subfamily. In terms of assembly, homodimer. It depends on pyridoxal 5'-phosphate as a cofactor.

It catalyses the reaction UDP-4-amino-4-deoxy-beta-L-arabinose + 2-oxoglutarate = UDP-beta-L-threo-pentopyranos-4-ulose + L-glutamate. The protein operates within nucleotide-sugar biosynthesis; UDP-4-deoxy-4-formamido-beta-L-arabinose biosynthesis; UDP-4-deoxy-4-formamido-beta-L-arabinose from UDP-alpha-D-glucuronate: step 2/3. Its pathway is bacterial outer membrane biogenesis; lipopolysaccharide biosynthesis. Catalyzes the conversion of UDP-4-keto-arabinose (UDP-Ara4O) to UDP-4-amino-4-deoxy-L-arabinose (UDP-L-Ara4N). The modified arabinose is attached to lipid A and is required for resistance to polymyxin and cationic antimicrobial peptides. This Pseudomonas aeruginosa (strain LESB58) protein is UDP-4-amino-4-deoxy-L-arabinose--oxoglutarate aminotransferase.